A 578-amino-acid chain; its full sequence is Thrombomodulin (578 aa).

A signal peptide spans 1–16 (MLRVLLLGVLAPAGLG). The Extracellular segment spans residues 17–518 (LPTPAQPQPR…SPSPVGPVHS (502 aa)). Positions 31–167 (MEHDCFQLFR…CAAEADGFLC (137 aa)) constitute a C-type lectin domain. Asn114 carries an N-linked (GlcNAc...) asparagine glycan. Intrachain disulfides connect Cys137/Cys158, Cys246/Cys257, Cys253/Cys266, Cys268/Cys281, Cys289/Cys297, Cys293/Cys309, Cys311/Cys324, Cys330/Cys341, Cys337/Cys350, Cys352/Cys363, Cys370/Cys379, Cys375/Cys389, Cys391/Cys405, Cys409/Cys414, Cys418/Cys426, Cys428/Cys440, Cys446/Cys455, Cys451/Cys464, and Cys466/Cys480. EGF-like domains follow at residues 242-282 (GAWD…RSCA) and 285-325 (AEHS…HRCE). N-linked (GlcNAc...) asparagine glycosylation occurs at Asn300. Residues 326-364 (DVDDCIQVPSLCPQLCVNTRGAFECHCYPGYELVDNECV) enclose the EGF-like 3; calcium-binding domain. Asn343 carries the post-translational modification (3R)-3-hydroxyasparagine. EGF-like domains lie at 366 to 406 (PVDP…HRCQ) and 405 to 441 (CQMF…FMCT). The N-linked (GlcNAc...) asparagine glycan is linked to Asn410. In terms of domain architecture, EGF-like 6; calcium-binding spans 442-481 (DIDECENGECPEACRNLPGTYECICGPDSPLAGQVATDCG). The disordered stretch occupies residues 483–512 (IISDPDGDSDSGSGEPPVTPTPGVTPSPSP). Residues Ser493 and Ser495 are each glycosylated (O-linked (Xyl...) (chondroitin sulfate) serine). Residues 499–512 (PVTPTPGVTPSPSP) show a composition bias toward pro residues. Residues 519 to 539 (GVLIGISIASLSLVVALLALL) form a helical membrane-spanning segment. Residues 540–578 (CHLRKKQGAPRAELEYKCGAPAKEVVLQHVRTEQMPQKL) lie on the Cytoplasmic side of the membrane.

Interacts with ITGAL, ITGAM and ITGB2. Interacts with thrombin/F2; this interaction switches the specificity of thrombin from a procoagulant to an anticoagulant and antifibrinolytic protease. Interacts with ANGP1 and ANGP2; these interactions significantly inhibit the generation of activated PC and TAFIa/CPB2 by the thrombin/thrombomodulin complex. Interacts with PF4; this interaction enhances generation of activated protein C. Interacts with HMGB1; this interaction inhibits HMGB1 inflammatory activity. In terms of processing, N-glycosylated. Post-translationally, the iron and 2-oxoglutarate dependent 3-hydroxylation of aspartate and asparagine is (R) stereospecific within EGF domains. As to expression, expressed in lung, liver, spleen, kidney, pancreas and lymph node. Low expression in heart, cerebrum, urinary bladder and uterus.

Its subcellular location is the membrane. Its function is as follows. Endothelial cell receptor that plays a critical role in regulating several physiological processes including hemostasis, coagulation, fibrinolysis, inflammation, and angiogenesis. Acts as a cofactor for thrombin activation of protein C/PROC on the surface of vascular endothelial cells leading to initiation of the activated protein C anticoagulant pathway. Also accelerates the activation of the plasma carboxypeptidase B2/CPB2, which catalyzes removal of C-terminal basic amino acids from its substrates including kinins or anaphylatoxins leading to fibrinolysis inhibition. Plays critical protective roles in changing the cleavage specificity of protease-activated receptor 1/PAR1, inhibiting endothelial cell permeability and inflammation. Suppresses inflammation distinctly from its anticoagulant cofactor activity by sequestering HMGB1 thereby preventing it from engaging cellular receptors such as RAGE and contributing to the inflammatory response. The chain is Thrombomodulin (THBD) from Canis lupus familiaris (Dog).